A 747-amino-acid polypeptide reads, in one-letter code: Polyribonucleotide nucleotidyltransferase (747 aa).

Residues Asp493 and Asp499 each contribute to the Mg(2+) site. The KH domain occupies 560–619; sequence PRIITLQINPEKIGALIGPGGKTVRGITEATGAQIDIEEDGRVYISTPDAAAAQQAVAMV. Residues 629–698 enclose the S1 motif domain; sequence GDIFLGKVVR…GTGKVSLSRR (70 aa). The tract at residues 705 to 747 is disordered; the sequence is TAEDRRAAGAGRGLRDGGGRSGGSDRGGDRGPRGDDRQRPRRR. Basic and acidic residues-rich tracts occupy residues 706-722 and 730-747; these read AEDRRAAGAGRGLRDGG and RGGDRGPRGDDRQRPRRR.

It belongs to the polyribonucleotide nucleotidyltransferase family. Requires Mg(2+) as cofactor.

It localises to the cytoplasm. The catalysed reaction is RNA(n+1) + phosphate = RNA(n) + a ribonucleoside 5'-diphosphate. Involved in mRNA degradation. Catalyzes the phosphorolysis of single-stranded polyribonucleotides processively in the 3'- to 5'-direction. This Roseiflexus sp. (strain RS-1) protein is Polyribonucleotide nucleotidyltransferase.